A 404-amino-acid polypeptide reads, in one-letter code: Cysteine desulfurase IscS (404 aa).

Pyridoxal 5'-phosphate is bound by residues 75-76 (AT), N155, Q183, and 203-205 (SGH). An N6-(pyridoxal phosphate)lysine modification is found at K206. Pyridoxal 5'-phosphate is bound at residue T243. The active-site Cysteine persulfide intermediate is C328. C328 serves as a coordination point for [2Fe-2S] cluster.

It belongs to the class-V pyridoxal-phosphate-dependent aminotransferase family. NifS/IscS subfamily. As to quaternary structure, homodimer. Forms a heterotetramer with IscU, interacts with other sulfur acceptors. Pyridoxal 5'-phosphate is required as a cofactor.

The protein localises to the cytoplasm. It catalyses the reaction (sulfur carrier)-H + L-cysteine = (sulfur carrier)-SH + L-alanine. It functions in the pathway cofactor biosynthesis; iron-sulfur cluster biosynthesis. Master enzyme that delivers sulfur to a number of partners involved in Fe-S cluster assembly, tRNA modification or cofactor biosynthesis. Catalyzes the removal of elemental sulfur atoms from cysteine to produce alanine. Functions as a sulfur delivery protein for Fe-S cluster synthesis onto IscU, an Fe-S scaffold assembly protein, as well as other S acceptor proteins. This Shewanella amazonensis (strain ATCC BAA-1098 / SB2B) protein is Cysteine desulfurase IscS.